Reading from the N-terminus, the 480-residue chain is Acetyl-coenzyme A carboxylase carboxyl transferase subunit beta, chloroplastic (480 aa).

The CoA carboxyltransferase N-terminal domain occupies Leu212 to Lys480. Residues Cys216, Cys219, Cys235, and Cys238 each coordinate Zn(2+). A C4-type zinc finger spans residues Cys216 to Cys238.

Belongs to the AccD/PCCB family. Acetyl-CoA carboxylase is a heterohexamer composed of biotin carboxyl carrier protein, biotin carboxylase and 2 subunits each of ACCase subunit alpha and ACCase plastid-coded subunit beta (accD). It depends on Zn(2+) as a cofactor.

The protein resides in the plastid. It localises to the chloroplast stroma. It carries out the reaction N(6)-carboxybiotinyl-L-lysyl-[protein] + acetyl-CoA = N(6)-biotinyl-L-lysyl-[protein] + malonyl-CoA. The protein operates within lipid metabolism; malonyl-CoA biosynthesis; malonyl-CoA from acetyl-CoA: step 1/1. Component of the acetyl coenzyme A carboxylase (ACC) complex. Biotin carboxylase (BC) catalyzes the carboxylation of biotin on its carrier protein (BCCP) and then the CO(2) group is transferred by the transcarboxylase to acetyl-CoA to form malonyl-CoA. In Illicium oligandrum (Star anise), this protein is Acetyl-coenzyme A carboxylase carboxyl transferase subunit beta, chloroplastic.